Here is a 485-residue protein sequence, read N- to C-terminus: Bindin (485 aa).

An N-terminal signal peptide occupies residues 1-20 (MGFHQISVIIVVLALASARA). A propeptide spanning residues 21–247 (ADEFPSHTDT…DSERGARKKR (227 aa)) is cleaved from the precursor. Disordered regions lie at residues 157-195 (GETRKRRGADDNDGDDVSKRASPRKGDEPAGHKLKDLAP), 219-273 (ISGH…PAQQ), and 305-331 (GGGQFGAFSPGEAEADNADYDEYSDSL). Basic and acidic residues predominate over residues 172–192 (DVSKRASPRKGDEPAGHKLKD). Over residues 250 to 264 (NQGNYPQAMNPQSRG) the composition is skewed to polar residues. Acidic residues predominate over residues 317–331 (AEADNADYDEYSDSL). Residues 371–379 (LRHLRHHSN) are fucose-binding domain. The tract at residues 459 to 485 (QQGMGGVPQRMGGQPQGNAYNQGYRQG) is disordered. Residues 465–475 (VPQRMGGQPQG) are compositionally biased toward low complexity. Residues 476 to 485 (NAYNQGYRQG) show a composition bias toward polar residues.

This sequence belongs to the bindin family.

The protein localises to the cytoplasmic vesicle. It is found in the secretory vesicle. The protein resides in the acrosome lumen. Species-specific sea urchin sperm protein required for adhesion of sperm to the egg surface during fertilization. Bindin coats the acrosomal process after it is externalized by the acrosome reaction. It binds to sulfated, fucose-containing polysaccharides on the vitelline layer receptor proteoglycans which cover the egg plasma membrane. This Mesocentrotus franciscanus (Giant red sea urchin) protein is Bindin.